The following is a 932-amino-acid chain: DNA mismatch repair protein MutS (932 aa).

ATP is bound at residue 615–622 (GPNMAGKS).

The protein belongs to the DNA mismatch repair MutS family.

Its function is as follows. This protein is involved in the repair of mismatches in DNA. It is possible that it carries out the mismatch recognition step. This protein has a weak ATPase activity. This chain is DNA mismatch repair protein MutS, found in Clostridium botulinum (strain Okra / Type B1).